A 49-amino-acid polypeptide reads, in one-letter code: Large ribosomal subunit protein bL33 (49 aa).

The protein belongs to the bacterial ribosomal protein bL33 family.

The polypeptide is Large ribosomal subunit protein bL33 (Thermosipho melanesiensis (strain DSM 12029 / CIP 104789 / BI429)).